A 194-amino-acid chain; its full sequence is uncharacterized protein (194 aa).

Belongs to the mimivirus R457/R459 family.

The protein resides in the virion. This is an uncharacterized protein from Acanthamoeba polyphaga mimivirus (APMV).